Consider the following 554-residue polypeptide: Solute carrier family 22 member 2 (554 aa).

The Cytoplasmic segment spans residues methionine 1–threonine 21. Residues phenylalanine 22 to leucine 42 form a helical membrane-spanning segment. Residues glycine 43–aspartate 149 lie on the Extracellular side of the membrane. N-linked (GlcNAc...) asparagine glycosylation occurs at asparagine 71. A helical membrane pass occupies residues leucine 150–alanine 170. The Cytoplasmic portion of the chain corresponds to aspartate 171–lysine 176. A helical membrane pass occupies residues leucine 177–proline 197. N-linked (GlcNAc...) asparagine glycosylation occurs at asparagine 198. Residues asparagine 198–glutamine 209 are Extracellular-facing. Residues glycine 210–leucine 230 form a helical membrane-spanning segment. The Cytoplasmic portion of the chain corresponds to asparagine 231–glycine 237. Residues isoleucine 238–leucine 258 form a helical membrane-spanning segment. Residues proline 259–arginine 262 are Extracellular-facing. The chain crosses the membrane as a helical span at residues tryptophan 263–proline 283. A Proline-rich sequence motif is present at residues proline 283 to arginine 287. Topologically, residues glutamate 284–cysteine 348 are cytoplasmic. A helical membrane pass occupies residues isoleucine 349–glycine 369. Residues leucine 370 to aspartate 374 are Extracellular-facing. A helical membrane pass occupies residues isoleucine 375 to alanine 395. The Cytoplasmic portion of the chain corresponds to threonine 396–arginine 403. The chain crosses the membrane as a helical span at residues tyrosine 404–proline 424. The Extracellular segment spans residues aspartate 425–leucine 427. The chain crosses the membrane as a helical span at residues glutamine 428–cysteine 450. At leucine 451–asparagine 463 the chain is on the cytoplasmic side. Residues leucine 464–valine 484 traverse the membrane as a helical segment. The Extracellular segment spans residues tyrosine 485–glutamine 493. Residues leucine 494–proline 514 traverse the membrane as a helical segment. Residues glutamate 515–threonine 554 are Cytoplasmic-facing.

Belongs to the major facilitator (TC 2.A.1) superfamily. Organic cation transporter (TC 2.A.1.19) family. Tyrosine phosphorylated. As to expression, expressed in kidney.

The protein resides in the basolateral cell membrane. The protein localises to the basal cell membrane. It carries out the reaction (R)-noradrenaline(out) = (R)-noradrenaline(in). The catalysed reaction is (R)-adrenaline(out) = (R)-adrenaline(in). The enzyme catalyses serotonin(out) = serotonin(in). It catalyses the reaction dopamine(out) = dopamine(in). It carries out the reaction histamine(out) = histamine(in). The catalysed reaction is thiamine(in) = thiamine(out). The enzyme catalyses creatinine(in) = creatinine(out). It catalyses the reaction 1-methylnicotinamide(out) = 1-methylnicotinamide(in). It carries out the reaction guanidine(out) = guanidine(in). The catalysed reaction is choline(out) = choline(in). The enzyme catalyses agmatine(out) = agmatine(in). It catalyses the reaction putrescine(out) = putrescine(in). It carries out the reaction spermidine(in) = spermidine(out). The catalysed reaction is tyramine(in) = tyramine(out). The enzyme catalyses L-histidyl-L-proline diketopiperazine(in) = L-histidyl-L-proline diketopiperazine(out). It catalyses the reaction (R)-salsolinol(in) = (R)-salsolinol(out). It carries out the reaction N-methyl-(R)-salsolinol(in) = N-methyl-(R)-salsolinol(out). The catalysed reaction is acetylcholine(in) = acetylcholine(out). The enzyme catalyses prostaglandin F2alpha(out) = prostaglandin F2alpha(in). It catalyses the reaction prostaglandin E2(out) = prostaglandin E2(in). Its activity is regulated as follows. Tyrosine phosphorylation of the transporter leads to activation of the transport activity. Inhibited by cGMP, most likely through a cGMP-binding protein that interacts with OCT2. In terms of biological role, electrogenic voltage-dependent transporter that mediates the transport of a variety of organic cations such as endogenous bioactive amines, cationic drugs and xenobiotics. Functions as a Na(+)-independent, bidirectional uniporter. Cation cellular uptake or release is driven by the electrochemical potential, i.e. membrane potential and concentration gradient. However, may also engage electroneutral cation exchange when saturating concentrations of cation substrates are reached. Predominantly expressed at the basolateral membrane of hepatocytes and proximal tubules and involved in the uptake and disposition of cationic compounds by hepatic and renal clearance from the blood flow. Implicated in monoamine neurotransmitters uptake such as histamine, dopamine, adrenaline/epinephrine, noradrenaline/norepinephrine, serotonin and tyramine, thereby supporting a physiological role in the central nervous system by regulating interstitial concentrations of neurotransmitters. Also capable of transporting dopaminergic neuromodulators cyclo(his-pro), salsolinol and N-methyl-salsolinol, thereby involved in the maintenance of dopaminergic cell integrity in the central nervous system. Mediates the bidirectional transport of acetylcholine (ACh) at the apical membrane of ciliated cell in airway epithelium, thereby playing a role in luminal release of ACh from bronchial epithelium. Also transports guanidine and endogenous monoamines such as vitamin B1/thiamine, creatinine and N-1-methylnicotinamide (NMN). Mediates the uptake and efflux of quaternary ammonium compound choline. Mediates the bidirectional transport of polyamine agmatine and the uptake of polyamines putrescine and spermidine. Able to transport non-amine endogenous compounds such as prostaglandin E2 (PGE2) and prostaglandin F2-alpha (PGF2-alpha). Also involved in the uptake of xenobiotic 4-(4-(dimethylamino)styryl)-N-methylpyridinium (ASP). May contribute to regulate the transport of organic compounds in testis across the blood-testis-barrier. This chain is Solute carrier family 22 member 2 (SLC22A2), found in Oryctolagus cuniculus (Rabbit).